The following is a 334-amino-acid chain: Phospho-N-acetylmuramoyl-pentapeptide-transferase (334 aa).

10 consecutive transmembrane segments (helical) span residues 11-31 (GAGLTALAGALALGPVVIPLM), 55-75 (PTMGGVIFIIPAILATLIFAP), 84-104 (LIIALVLTVGHGLVGFADDYI), 124-144 (VGLAAVLGYGAVEVLGLGTAV), 158-178 (PLYYLLVLIMVWGTASAVNFA), 184-204 (LLGGLSVITFSFYGLVVALAL), 205-225 (GQTDMAVLGTALVGGVLGFLH), 233-253 (IFMGDVGSFALGGALAALAVL), 258-278 (FLLVIVGAVYVIEVISVILQV), and 311-331 (LFWGAGLLFTLLGWLVLPGML).

It belongs to the glycosyltransferase 4 family. MraY subfamily. Requires Mg(2+) as cofactor.

Its subcellular location is the cell membrane. The catalysed reaction is UDP-N-acetyl-alpha-D-muramoyl-L-alanyl-gamma-D-glutamyl-meso-2,6-diaminopimeloyl-D-alanyl-D-alanine + di-trans,octa-cis-undecaprenyl phosphate = di-trans,octa-cis-undecaprenyl diphospho-N-acetyl-alpha-D-muramoyl-L-alanyl-D-glutamyl-meso-2,6-diaminopimeloyl-D-alanyl-D-alanine + UMP. It functions in the pathway cell wall biogenesis; peptidoglycan biosynthesis. Its function is as follows. Catalyzes the initial step of the lipid cycle reactions in the biosynthesis of the cell wall peptidoglycan: transfers peptidoglycan precursor phospho-MurNAc-pentapeptide from UDP-MurNAc-pentapeptide onto the lipid carrier undecaprenyl phosphate, yielding undecaprenyl-pyrophosphoryl-MurNAc-pentapeptide, known as lipid I. The sequence is that of Phospho-N-acetylmuramoyl-pentapeptide-transferase from Symbiobacterium thermophilum (strain DSM 24528 / JCM 14929 / IAM 14863 / T).